A 393-amino-acid chain; its full sequence is MSDHVKITPMTLNFGPQHPAAHGVMRLVLEMGGEVIERIDPHIGLLHRGTEKLIEYKTYLQALPYFDRLDYVSPMAQEHAYSLCVEKLLKCEVPIRAKYLRVIFCELTRILNHLLNISSQALDIGAMTPLLWMFEEREKILNFYERASGARFHSAYIRPGGVAADIPEDLIHDIFQFVNTFPKFMDDVDSLLTENRIWKQRNVDIGVVSKKQALNWGFSGPMLRACGIPWDLRKSQPYEIYDELEFKIPIGEKGDCYDRYLVRMAEIRESIRLVEQCLNRIPDGPVKTDDRKIAPPKRSEMKKSMEALIHHFKLYSEGYSVPAGETYMAVEAPKGEFGVYIVSDGTNKPYRCRIRAPGFAHLQAIDMMAKGHMLADLTAIIGSLDIVFGEIDR.

This sequence belongs to the complex I 49 kDa subunit family. As to quaternary structure, NDH-1 is composed of 14 different subunits. Subunits NuoB, C, D, E, F, and G constitute the peripheral sector of the complex.

It is found in the cell inner membrane. The enzyme catalyses a quinone + NADH + 5 H(+)(in) = a quinol + NAD(+) + 4 H(+)(out). Functionally, NDH-1 shuttles electrons from NADH, via FMN and iron-sulfur (Fe-S) centers, to quinones in the respiratory chain. The immediate electron acceptor for the enzyme in this species is believed to be ubiquinone. Couples the redox reaction to proton translocation (for every two electrons transferred, four hydrogen ions are translocated across the cytoplasmic membrane), and thus conserves the redox energy in a proton gradient. The sequence is that of NADH-quinone oxidoreductase subunit D from Ehrlichia ruminantium (strain Welgevonden).